The sequence spans 453 residues: Ribulose bisphosphate carboxylase large chain (453 aa).

Positions 1 to 2 (MS) are excised as a propeptide. The residue at position 3 (P3) is an N-acetylproline. An N6,N6,N6-trimethyllysine modification is found at K14. 2 residues coordinate substrate: N123 and T173. K175 serves as the catalytic Proton acceptor. K177 contacts substrate. Mg(2+) contacts are provided by K201, D203, and E204. Residue K201 is modified to N6-carboxylysine. Residue H294 is the Proton acceptor of the active site. R295, H327, and S379 together coordinate substrate.

Belongs to the RuBisCO large chain family. Type I subfamily. Heterohexadecamer of 8 large chains and 8 small chains; disulfide-linked. The disulfide link is formed within the large subunit homodimers. Requires Mg(2+) as cofactor. In terms of processing, the disulfide bond which can form in the large chain dimeric partners within the hexadecamer appears to be associated with oxidative stress and protein turnover.

The protein resides in the plastid. It localises to the chloroplast. It catalyses the reaction 2 (2R)-3-phosphoglycerate + 2 H(+) = D-ribulose 1,5-bisphosphate + CO2 + H2O. The enzyme catalyses D-ribulose 1,5-bisphosphate + O2 = 2-phosphoglycolate + (2R)-3-phosphoglycerate + 2 H(+). In terms of biological role, ruBisCO catalyzes two reactions: the carboxylation of D-ribulose 1,5-bisphosphate, the primary event in carbon dioxide fixation, as well as the oxidative fragmentation of the pentose substrate in the photorespiration process. Both reactions occur simultaneously and in competition at the same active site. The polypeptide is Ribulose bisphosphate carboxylase large chain (Sherardia arvensis (Blue field-madder)).